A 542-amino-acid polypeptide reads, in one-letter code: N-substituted formamide deformylase (542 aa).

Residues 1 to 2 constitute a propeptide that is removed on maturation; it reads MT.

As to quaternary structure, homodimer. Requires Zn(2+) as cofactor.

It catalyses the reaction N-benzylformamide + H2O = benzylamine + formate. Completely inhibited by HgCl(2), CuCl, CuCl(2) and AgNO(3). Partially inhibited by ZnCl(2) and SnCl(2). Almost completely inhibited by the reducing reagent DTT. Partially inhibited by phenylhydrazine. Moderately inhibited by phenanthroline and 8-hydroxyquinoline. Completely inhibited by the thiol-specific inhibitors N-ethylmaleimide and p-chloromercuribenzoate. Not inhibited by the carbonyl-specific inhibitors aminoguanidine and semicarbazide, the chelating agents alpha,alpha'-dipyridyl, KCN, diethyldithiocarbamate and EDTA, or the oxidizing reagents and serine-modifying reagents such as H(2)O(2), ammonium persulfate, phenylmethanesulfonyl fluoride and diisopropyl fluorophosphates. In terms of biological role, hydrolyzes N-substituted formamides, but not amides. N-benzylformamide is the preferred substrate, while N-butylformamide is hydrolyzed at a much lower rate. Has very low activity towards allylformamide, N-(2-cyclohex-1-enylethyl)formamide and N-(alpha-methylbenzyl)formamide. The chain is N-substituted formamide deformylase from Arthrobacter pascens.